The following is a 157-amino-acid chain: Spore germination protein GerT (157 aa).

The protein localises to the spore coat. In terms of biological role, involved in spore germination; probably required at the earliest stage of germination. This chain is Spore germination protein GerT (gerT), found in Bacillus subtilis (strain 168).